Consider the following 165-residue polypeptide: Lipoprotein signal peptidase (165 aa).

The next 3 membrane-spanning stretches (helical) occupy residues 9 to 29, 65 to 85, and 97 to 119; these read PFLWISAVAFFTDLITKLAVV, WQKYFFILLALAVSFMILFFL, and TGYALMIGGALANAADRAYHGFV. Residues Asp121 and Asp139 contribute to the active site. The chain crosses the membrane as a helical span at residues 134–154; it reads VFNVADIAICIGAGLLAIDAF.

Belongs to the peptidase A8 family.

Its subcellular location is the cell inner membrane. The enzyme catalyses Release of signal peptides from bacterial membrane prolipoproteins. Hydrolyzes -Xaa-Yaa-Zaa-|-(S,diacylglyceryl)Cys-, in which Xaa is hydrophobic (preferably Leu), and Yaa (Ala or Ser) and Zaa (Gly or Ala) have small, neutral side chains.. It functions in the pathway protein modification; lipoprotein biosynthesis (signal peptide cleavage). Functionally, this protein specifically catalyzes the removal of signal peptides from prolipoproteins. This Histophilus somni (strain 2336) (Haemophilus somnus) protein is Lipoprotein signal peptidase.